The following is a 102-amino-acid chain: MVDLKITLVNEDGESTISGKGHPLPAPLIFPPIYIFRFTQYQTEGKLWDKNEFQIKSGKIEFDGEEYDIPESKGTWSKDDEENAIDVNLHLFRPPEKFFPKN.

Belongs to the csb family. In terms of processing, O-glycosylated.

The protein resides in the cell surface. Cell-cell adhesion during early development. The sequence is that of Glycoprotein 24A (csbA) from Dictyostelium discoideum (Social amoeba).